An 88-amino-acid chain; its full sequence is Small ribosomal subunit protein uS15c (88 aa).

Belongs to the universal ribosomal protein uS15 family. As to quaternary structure, part of the 30S ribosomal subunit.

It is found in the plastid. The protein resides in the chloroplast. This Aethionema grandiflorum (Persian stone-cress) protein is Small ribosomal subunit protein uS15c (rps15).